A 1272-amino-acid polypeptide reads, in one-letter code: Regulator of nonsense transcripts 2 (1272 aa).

Basic and acidic residues predominate over residues M1–E114. Disordered stretches follow at residues M1–E126, D370–G389, N423–T445, and C490–D517. A coiled-coil region spans residues E54 to A134. Residues K94–E133 form a sufficient for interaction with UPF1 region. The MIF4G 1 domain occupies L168 to K431. Composition is skewed to basic and acidic residues over residues P428 to P439 and C490 to S513. Residues E487–S559 adopt a coiled-coil conformation. MIF4G domains follow at residues D569–P758 and E773–K986. Residues G711–T928 form a sufficient for interaction with UPF3A and UPF3B region. A sufficient for interaction with EIF4A1 and EIF1 region spans residues P757–R1272. The interval E839–V859 is binds to UPF3B. Residues D1018–K1098 form a disordered region. Residues E1027–T1076 show a composition bias toward acidic residues. Positions K1084–R1272 are sufficient for interaction with UPF1 C-terminus. T1088 carries the post-translational modification Phosphothreonine. 2 interaction with UPF1 regions span residues V1105–S1129 and D1167–E1207. Positions V1105 to H1198 are necessary for interaction with UPF1. The segment at N1220–R1272 is disordered.

Found in a post-splicing messenger ribonucleoprotein (mRNP) complex. Associates with the exon junction complex (EJC). Interacts with SMG1, EST1A, UPF1, UPF3A, UPF3B, EIF4A1 and EIF1. In terms of tissue distribution, ubiquitous.

It is found in the cytoplasm. The protein resides in the perinuclear region. Functionally, involved in nonsense-mediated decay (NMD) of mRNAs containing premature stop codons by associating with the nuclear exon junction complex (EJC). Recruited by UPF3B associated with the EJC core at the cytoplasmic side of the nuclear envelope and the subsequent formation of an UPF1-UPF2-UPF3 surveillance complex (including UPF1 bound to release factors at the stalled ribosome) is believed to activate NMD. In cooperation with UPF3B stimulates both ATPase and RNA helicase activities of UPF1. Binds spliced mRNA. This is Regulator of nonsense transcripts 2 from Homo sapiens (Human).